The primary structure comprises 341 residues: Aspartate carbamoyltransferase catalytic subunit (341 aa).

2 residues coordinate carbamoyl phosphate: arginine 74 and threonine 75. Lysine 102 contributes to the L-aspartate binding site. 3 residues coordinate carbamoyl phosphate: arginine 124, histidine 152, and glutamine 155. L-aspartate-binding residues include arginine 190 and arginine 244. Carbamoyl phosphate is bound by residues glycine 285 and proline 286.

Belongs to the aspartate/ornithine carbamoyltransferase superfamily. ATCase family. Heterododecamer (2C3:3R2) of six catalytic PyrB chains organized as two trimers (C3), and six regulatory PyrI chains organized as three dimers (R2).

The enzyme catalyses carbamoyl phosphate + L-aspartate = N-carbamoyl-L-aspartate + phosphate + H(+). The protein operates within pyrimidine metabolism; UMP biosynthesis via de novo pathway; (S)-dihydroorotate from bicarbonate: step 2/3. In terms of biological role, catalyzes the condensation of carbamoyl phosphate and aspartate to form carbamoyl aspartate and inorganic phosphate, the committed step in the de novo pyrimidine nucleotide biosynthesis pathway. The sequence is that of Aspartate carbamoyltransferase catalytic subunit from Novosphingobium aromaticivorans (strain ATCC 700278 / DSM 12444 / CCUG 56034 / CIP 105152 / NBRC 16084 / F199).